Consider the following 64-residue polypeptide: Large ribosomal subunit protein bL35 (64 aa).

Belongs to the bacterial ribosomal protein bL35 family.

The protein is Large ribosomal subunit protein bL35 of Shewanella oneidensis (strain ATCC 700550 / JCM 31522 / CIP 106686 / LMG 19005 / NCIMB 14063 / MR-1).